We begin with the raw amino-acid sequence, 265 residues long: Hemin import ATP-binding protein HmuV (265 aa).

Residues 13–249 (LKASNLHLQL…TAVENVYGWP (237 aa)) form the ABC transporter domain. Position 45–52 (45–52 (GPNGAGKS)) interacts with ATP.

The protein belongs to the ABC transporter superfamily. Heme (hemin) importer (TC 3.A.1.14.5) family. In terms of assembly, the complex is composed of two ATP-binding proteins (HmuV), two transmembrane proteins (HmuU) and a solute-binding protein (HmuT).

It is found in the cell inner membrane. Its function is as follows. Part of the ABC transporter complex HmuTUV involved in hemin import. Responsible for energy coupling to the transport system. The chain is Hemin import ATP-binding protein HmuV from Photobacterium damsela subsp. piscicida (Pasteurella piscicida).